Here is a 736-residue protein sequence, read N- to C-terminus: Protein kinase C epsilon type (736 aa).

Residues 1 to 117 (MVVFNGLLKI…NGSRHFEDWI (117 aa)) form the C2 domain. Ser-62 is modified (phosphoserine). The segment at 169 to 220 (GHKFMATYLRQPTYCSHCRDFIWGVIGKQGYQCQVCTCVVHKRCHELIITKV) adopts a Phorbol-ester/DAG-type 1 zinc-finger fold. Thr-228 carries the post-translational modification Phosphothreonine. Ser-234 carries the post-translational modification Phosphoserine. A Phorbol-ester/DAG-type 2 zinc finger spans residues 242–292 (PHKFGIHNYKVPTFCDHCGSLLWGLLRQGLQCKVCKMNVHRRCETNVAPNC). Residue Thr-309 is modified to Phosphothreonine. The tract at residues 310–356 (PDKITNSGQRRKKLIGGAESPQPTSGSSPSEEDRSKSAPTSPCDQEL) is disordered. Residues Ser-316, Ser-329, and Ser-337 each carry the phosphoserine modification. Ser-346 carries the phosphoserine; by GSK3-beta modification. A Phosphothreonine modification is found at Thr-349. Residue Ser-350 is modified to Phosphoserine; by MAPK11 and MAPK14. Ser-368 carries the phosphoserine; by autocatalysis modification. Residues 369-397 (FDNRGEEHRAASSTDGQLGSPENGEVRQG) form a disordered region. A Phosphoserine modification is found at Ser-388. Positions 407 to 667 (FNFIKVLGKG…EDAIKQHPFF (261 aa)) constitute a Protein kinase domain. Residues 413 to 421 (LGKGSFGKV) and Lys-436 contribute to the ATP site. The Proton acceptor role is filled by Asp-531. Thr-565 carries the post-translational modification Phosphothreonine; by PDPK1. Residues 668–736 (KEIDWVLLEQ…FSYFGEDLMP (69 aa)) enclose the AGC-kinase C-terminal domain. Thr-702 bears the Phosphothreonine mark. Thr-709 is modified (phosphothreonine; by autocatalysis). Ser-728 carries the phosphoserine; by autocatalysis modification.

The protein belongs to the protein kinase superfamily. AGC Ser/Thr protein kinase family. PKC subfamily. Forms a ternary complex with TRIM63 and RACK1/GN2BL1. Can form a complex with PDLIM5 and N-type calcium channel. Interacts with COPB1. Interacts with DGKQ. Interacts with STAT3. Interacts with YWHAB. Interacts with HSP90AB1; promotes functional activation in a heat shock-dependent manner. Interacts (via phorbol-ester/DAG-type 2 domain) with PRPH and VIM. Interacts with NLRP5/MATER. Phosphorylation on Thr-565 by PDPK1 triggers autophosphorylation on Ser-728. Phosphorylation in the hinge domain at Ser-350 by MAPK11 or MAPK14, Ser-346 by GSK3B and Ser-368 by autophosphorylation is required for interaction with YWHAB. In response to growth factors, phosphorylated at Thr-702 and Ser-728 by the mTORC2 complex, promoting autophosphorylation and activation of PRKCE.

Its subcellular location is the cytoplasm. The protein resides in the cytoskeleton. It localises to the cell membrane. The protein localises to the perinuclear region. It is found in the nucleus. It catalyses the reaction L-seryl-[protein] + ATP = O-phospho-L-seryl-[protein] + ADP + H(+). It carries out the reaction L-threonyl-[protein] + ATP = O-phospho-L-threonyl-[protein] + ADP + H(+). Its activity is regulated as follows. Novel PKCs (PRKCD, PRKCE, PRKCH and PRKCQ) are calcium-insensitive, but activated by diacylglycerol (DAG) and phosphatidylserine. Three specific sites; Thr-565 (activation loop of the kinase domain), Thr-709 (turn motif) and Ser-728 (hydrophobic region), need to be phosphorylated for its full activation. Functionally, calcium-independent, phospholipid- and diacylglycerol (DAG)-dependent serine/threonine-protein kinase that plays essential roles in the regulation of multiple cellular processes linked to cytoskeletal proteins, such as cell adhesion, motility, migration and cell cycle, functions in neuron growth and ion channel regulation, and is involved in immune response, cancer cell invasion and regulation of apoptosis. Mediates cell adhesion to the extracellular matrix via integrin-dependent signaling, by mediating angiotensin-2-induced activation of integrin beta-1 (ITGB1) in cardiac fibroblasts. Phosphorylates MARCKS, which phosphorylates and activates PTK2/FAK, leading to the spread of cardiomyocytes. Involved in the control of the directional transport of ITGB1 in mesenchymal cells by phosphorylating vimentin (VIM), an intermediate filament (IF) protein. In epithelial cells, associates with and phosphorylates keratin-8 (KRT8), which induces targeting of desmoplakin at desmosomes and regulates cell-cell contact. Phosphorylates IQGAP1, which binds to CDC42, mediating epithelial cell-cell detachment prior to migration. During cytokinesis, forms a complex with YWHAB, which is crucial for daughter cell separation, and facilitates abscission by a mechanism which may implicate the regulation of RHOA. In cardiac myocytes, regulates myofilament function and excitation coupling at the Z-lines, where it is indirectly associated with F-actin via interaction with COPB1. During endothelin-induced cardiomyocyte hypertrophy, mediates activation of PTK2/FAK, which is critical for cardiomyocyte survival and regulation of sarcomere length. Plays a role in the pathogenesis of dilated cardiomyopathy via persistent phosphorylation of troponin I (TNNI3). Involved in nerve growth factor (NFG)-induced neurite outgrowth and neuron morphological change independently of its kinase activity, by inhibition of RHOA pathway, activation of CDC42 and cytoskeletal rearrangement. May be involved in presynaptic facilitation by mediating phorbol ester-induced synaptic potentiation. Phosphorylates gamma-aminobutyric acid receptor subunit gamma-2 (GABRG2), which reduces the response of GABA receptors to ethanol and benzodiazepines and may mediate acute tolerance to the intoxicating effects of ethanol. Upon PMA treatment, phosphorylates the capsaicin- and heat-activated cation channel TRPV1, which is required for bradykinin-induced sensitization of the heat response in nociceptive neurons. Is able to form a complex with PDLIM5 and N-type calcium channel, and may enhance channel activities and potentiates fast synaptic transmission by phosphorylating the pore-forming alpha subunit CACNA1B (CaV2.2). Downstream of TLR4, plays an important role in the lipopolysaccharide (LPS)-induced immune response by phosphorylating and activating TICAM2/TRAM, which in turn activates the transcription factor IRF3 and subsequent cytokines production. In differentiating erythroid progenitors, is regulated by EPO and controls the protection against the TNFSF10/TRAIL-mediated apoptosis, via BCL2. May be involved in the regulation of the insulin-induced phosphorylation and activation of AKT1. Phosphorylates NLRP5/MATER and may thereby modulate AKT pathway activation in cumulus cells. Phosphorylates and activates LRRK1, which phosphorylates RAB proteins involved in intracellular trafficking. The sequence is that of Protein kinase C epsilon type (PRKCE) from Oryctolagus cuniculus (Rabbit).